The following is a 510-amino-acid chain: ATP synthase subunit alpha, chloroplastic (510 aa).

170–177 lines the ATP pocket; sequence GDRQTGKT.

It belongs to the ATPase alpha/beta chains family. In terms of assembly, F-type ATPases have 2 components, CF(1) - the catalytic core - and CF(0) - the membrane proton channel. CF(1) has five subunits: alpha(3), beta(3), gamma(1), delta(1), epsilon(1). CF(0) has four main subunits: a, b, b' and c.

The protein localises to the plastid. The protein resides in the chloroplast thylakoid membrane. It carries out the reaction ATP + H2O + 4 H(+)(in) = ADP + phosphate + 5 H(+)(out). Produces ATP from ADP in the presence of a proton gradient across the membrane. The alpha chain is a regulatory subunit. The protein is ATP synthase subunit alpha, chloroplastic of Phaseolus vulgaris (Kidney bean).